Consider the following 504-residue polypeptide: Glycerol kinase (504 aa).

Thr16 contacts ADP. ATP is bound by residues Thr16 and Thr17. Residue Thr16 participates in sn-glycerol 3-phosphate binding. Residue Arg20 coordinates ADP. The sn-glycerol 3-phosphate site is built by Arg86, Glu87, Tyr138, and Asp247. Glycerol contacts are provided by Arg86, Glu87, Tyr138, Asp247, and Gln248. Residues Thr269 and Gly316 each contribute to the ADP site. Residues Thr269, Gly316, Gln320, and Gly417 each contribute to the ATP site. Residues Gly417 and Asn421 each contribute to the ADP site.

The protein belongs to the FGGY kinase family.

It catalyses the reaction glycerol + ATP = sn-glycerol 3-phosphate + ADP + H(+). The protein operates within polyol metabolism; glycerol degradation via glycerol kinase pathway; sn-glycerol 3-phosphate from glycerol: step 1/1. Inhibited by fructose 1,6-bisphosphate (FBP). Its function is as follows. Key enzyme in the regulation of glycerol uptake and metabolism. Catalyzes the phosphorylation of glycerol to yield sn-glycerol 3-phosphate. This is Glycerol kinase from Trichodesmium erythraeum (strain IMS101).